A 51-amino-acid polypeptide reads, in one-letter code: uncharacterized protein (51 aa).

The interval 1-51 (MKRKAEVNEAIKNNNTPTESMDPNSYKTQYHDDPNFRGANRNSKQGQQGGM) is disordered. Composition is skewed to polar residues over residues 11–28 (IKNN…SYKT) and 40–51 (NRNSKQGQQGGM).

This is an uncharacterized protein from Bacillus subtilis (strain 168).